The chain runs to 832 residues: Adhesin AWP2 (832 aa).

An N-terminal signal peptide occupies residues 1–25; the sequence is MRKLPLFMAWKFWLICLYIIKVAST. Asn-187, Asn-290, Asn-372, Asn-390, Asn-435, Asn-448, Asn-472, Asn-482, Asn-507, Asn-512, Asn-515, Asn-534, Asn-562, Asn-579, Asn-695, and Asn-721 each carry an N-linked (GlcNAc...) asparagine glycan. The tract at residues 722–747 is disordered; it reads QTTSPSMHTTSLVGSENGVSAKTVND.

The protein resides in the secreted. Its subcellular location is the cell wall. In terms of biological role, mediates cell-substrate adhesion and promotes biofilm formation. This Candida glabrata (strain ATCC 2001 / BCRC 20586 / JCM 3761 / NBRC 0622 / NRRL Y-65 / CBS 138) (Yeast) protein is Adhesin AWP2.